A 255-amino-acid chain; its full sequence is Large ribosomal subunit protein uL4 (255 aa).

It belongs to the universal ribosomal protein uL4 family. Part of the 50S ribosomal subunit.

Its function is as follows. One of the primary rRNA binding proteins, this protein initially binds near the 5'-end of the 23S rRNA. It is important during the early stages of 50S assembly. It makes multiple contacts with different domains of the 23S rRNA in the assembled 50S subunit and ribosome. Functionally, forms part of the polypeptide exit tunnel. The protein is Large ribosomal subunit protein uL4 of Thermoplasma volcanium (strain ATCC 51530 / DSM 4299 / JCM 9571 / NBRC 15438 / GSS1).